Consider the following 387-residue polypeptide: Acetylornithine deacetylase (387 aa).

Residue His-80 coordinates Zn(2+). Residue Asp-82 is part of the active site. Zn(2+) is bound at residue Asp-112. Glu-144 is a catalytic residue. Residues Glu-145, Glu-169, and His-355 each coordinate Zn(2+).

The protein belongs to the peptidase M20A family. ArgE subfamily. As to quaternary structure, homodimer. The cofactor is Zn(2+). Requires Co(2+) as cofactor. Glutathione is required as a cofactor.

It localises to the cytoplasm. It carries out the reaction N(2)-acetyl-L-ornithine + H2O = L-ornithine + acetate. It participates in amino-acid biosynthesis; L-arginine biosynthesis; L-ornithine from N(2)-acetyl-L-ornithine (linear): step 1/1. Functionally, catalyzes the hydrolysis of the amide bond of N(2)-acetylated L-amino acids. Cleaves the acetyl group from N-acetyl-L-ornithine to form L-ornithine, an intermediate in L-arginine biosynthesis pathway, and a branchpoint in the synthesis of polyamines. The protein is Acetylornithine deacetylase of Proteus mirabilis (strain HI4320).